Reading from the N-terminus, the 514-residue chain is Putative ribose/galactose/methyl galactoside import ATP-binding protein 3 (514 aa).

ABC transporter domains follow at residues 21–256 (LRLD…VGRT) and 267–512 (VPTD…SGRS). An ATP-binding site is contributed by 53 to 60 (GENGAGKS).

It belongs to the ABC transporter superfamily. Carbohydrate importer 2 (CUT2) (TC 3.A.1.2) family.

It localises to the cell inner membrane. It carries out the reaction D-ribose(out) + ATP + H2O = D-ribose(in) + ADP + phosphate + H(+). The enzyme catalyses D-galactose(out) + ATP + H2O = D-galactose(in) + ADP + phosphate + H(+). Its function is as follows. Part of an ABC transporter complex involved in carbohydrate import. Could be involved in ribose, galactose and/or methyl galactoside import. Responsible for energy coupling to the transport system. The sequence is that of Putative ribose/galactose/methyl galactoside import ATP-binding protein 3 from Burkholderia cenocepacia (strain HI2424).